The chain runs to 303 residues: Acetaldehyde dehydrogenase (303 aa).

Catalysis depends on Cys131, which acts as the Acyl-thioester intermediate. Residues Ser162–Asn170 and Asn273 each bind NAD(+).

It belongs to the acetaldehyde dehydrogenase family.

It catalyses the reaction acetaldehyde + NAD(+) + CoA = acetyl-CoA + NADH + H(+). The protein is Acetaldehyde dehydrogenase of Marinomonas sp. (strain MWYL1).